The following is a 234-amino-acid chain: Small ribosomal subunit protein eS4 (234 aa).

Residues 43-106 (MPIAVWLRDY…NEYYRVLLDE (64 aa)) form the S4 RNA-binding domain.

This sequence belongs to the eukaryotic ribosomal protein eS4 family.

This Nanoarchaeum equitans (strain Kin4-M) protein is Small ribosomal subunit protein eS4.